We begin with the raw amino-acid sequence, 375 residues long: MFRILTINPGSTSTKLSIFEDERMVKMQNFSHSPDELGRFQKILDQLEFREKIARQFVEETGYSLSSFSAFVSRGGLLDPIPGGVYLVDGLMIKTLKSGKNGEHASNLGAIIAHRFSSETGVPAYVVDPVVVDEMEDVARVSGHPNYQRKSIFHALNQKTVAKEVARMMNKRYEEMNLVVAHMGGGISIAAHRKGRVIDVNNALDGDGPFTPERSGTLPLTQLVDLCFSGKFTYEEMKKRIVGNGGLVAYLGTSDAREVVRRIKQGDEWAKRVYRAMAYQIAKWIGKMAAVLKGEVDFIVLTGGLAHEKEFLVPWITKRVSFIAPVLVFPGSNEEKALALSALRVLRGEEKPKNYSEESRRWRERYDSYLDGILR.

Belongs to the acetokinase family.

It localises to the cytoplasm. The catalysed reaction is butanoate + ATP = butanoyl phosphate + ADP. In Thermotoga maritima (strain ATCC 43589 / DSM 3109 / JCM 10099 / NBRC 100826 / MSB8), this protein is Probable butyrate kinase 2.